The primary structure comprises 1426 residues: Epidermal growth factor receptor (1426 aa).

The signal sequence occupies residues 1–30; the sequence is MLLRRRNGPCPFPLLLLLLAHCICIWPASA. Topologically, residues 31–868 are extracellular; sequence ARDRYARQNN…SKITANLDVN (838 aa). Residues N128, N241, N419, N443, N482, N569, N599, N617, N816, N823, and N828 are each glycosylated (N-linked (GlcNAc...) asparagine). Residues 869 to 889 form a helical membrane-spanning segment; that stretch reads MIFIITGAVLVPTICILCVVT. At 890–1426 the chain is on the cytoplasmic side; sequence YICRQKQKAK…HRNRNTETRV (537 aa). T902 bears the Phosphothreonine; by PKC mark. The 261-residue stretch at 938–1198 folds into the Protein kinase domain; the sequence is LRKGGVLGMG…QLTTVFAEFA (261 aa). Residues 944-952 and K971 contribute to the ATP site; that span reads LGMGAFGRV. D1063 (proton acceptor) is an active-site residue. The tract at residues 1232–1297 is disordered; it reads PTTDGSEAIA…DSSAREVGVG (66 aa). The span at 1257–1276 shows a compositional bias: basic and acidic residues; sequence HRTDCTDEMPKLNRYCKDPS. Y1310 is subject to Phosphotyrosine; by autocatalysis.

The protein belongs to the protein kinase superfamily. Tyr protein kinase family. EGF receptor subfamily. In terms of assembly, homodimer. Binding of the ligand spitz triggers homodimerization of the receptor however, it is able to form dimers, albeit weakly, in the absence of spitz. Interacts (when phosphorylated on tyrosine residues) with Vav (via SH2 domain). Interacts (when ubiquitinated) with Graf. May interact (when phosphorylated) with EGFRAP (via SH2 domain). In terms of processing, ubiquitination by Cbl in response to high spi, promotes its interaction with Graf and thus facilitates its GPI-enriched endocytic compartment (GEEC) mediated endocytosis and its subsequent degradation. Ubiquitously expressed in embryos. In larvae, uniform expression is seen in wing disks, genital disk, anlagen of testis and ovary, and brain cortex. In eye-antenna disk, highest expression is anterior to morphogenetic furrow, levels remain high in photoreceptor precursor cells. This pattern is reversed in posterior eye disk. In adults expression is high in brain cortex and thoracic and abdominal ganglia.

The protein resides in the membrane. The catalysed reaction is L-tyrosyl-[protein] + ATP = O-phospho-L-tyrosyl-[protein] + ADP + H(+). Functionally, receptor tyrosine kinase, binding ligands of the EGF family and activating several signaling cascades to convert extracellular cues into appropriate cellular responses. Known ligands include spitz, gurken, vein and giant-lens. Transduces the signal through the ras-raf-MAPK pathway. Critical for the proliferation of imaginal tissues, and for the determination of both the antero-posterior and dorso-ventral polarities of the oocyte. In the embryo, plays a role in the establishment of ventral cell fates, maintenance of amnioserosa and ventral neuroectodermal cells, germ band retraction, cell fate specification in the central nervous system, and production and repair of the cuticle. During dorsal closure (DC) functions with the dpp- and ACK-signaling pathways to regulate expression of the myosin zip in the embryonic epidermis and amnioserosa (AS), and thus coordinate the progression of epidermal cell shape changes required for correct DC. In the embryonic epidermis, functions by negatively regulating dpp and consequently the dpp-dependent expression of the myosin zip. In the AS, negatively regulates the production/ and or secretion of a diffusible signal which, is produced by the ACK-signaling pathway, and acts in the AS and epidermal cells to promote zip expression. Also required in the AS to inhibit or delay apoptosis, and consequently slow the rate of DC. Therefore functions at multiple levels to negatively regulate morphogenesis during DC, suggesting that it acts as a general brake mechanism for adjusting the rate of dorsal closure to ensure that closure proceeds smoothly and without loss of epidermal integrity. During oogenesis, one of two tyrosine kinase chemoattractant receptors (Egfr and Pvr), that function in the border cells (BC) to detect guidance cues from the oocyte and transduce this information to the guidance pathway that regulate the collective migration of the BC cluster through the nurse cells to the oocyte. In Drosophila melanogaster (Fruit fly), this protein is Epidermal growth factor receptor (Egfr).